The chain runs to 496 residues: Aspartyl/glutamyl-tRNA(Asn/Gln) amidotransferase subunit B (496 aa).

The segment at 475–496 (TGGSADPSKVNTLLREQLEDKK) is disordered.

It belongs to the GatB/GatE family. GatB subfamily. Heterotrimer of A, B and C subunits.

The catalysed reaction is L-glutamyl-tRNA(Gln) + L-glutamine + ATP + H2O = L-glutaminyl-tRNA(Gln) + L-glutamate + ADP + phosphate + H(+). The enzyme catalyses L-aspartyl-tRNA(Asn) + L-glutamine + ATP + H2O = L-asparaginyl-tRNA(Asn) + L-glutamate + ADP + phosphate + 2 H(+). Functionally, allows the formation of correctly charged Asn-tRNA(Asn) or Gln-tRNA(Gln) through the transamidation of misacylated Asp-tRNA(Asn) or Glu-tRNA(Gln) in organisms which lack either or both of asparaginyl-tRNA or glutaminyl-tRNA synthetases. The reaction takes place in the presence of glutamine and ATP through an activated phospho-Asp-tRNA(Asn) or phospho-Glu-tRNA(Gln). This chain is Aspartyl/glutamyl-tRNA(Asn/Gln) amidotransferase subunit B, found in Haloquadratum walsbyi (strain DSM 16790 / HBSQ001).